The following is a 718-amino-acid chain: Myeloperoxidase (718 aa).

Residues 1 to 15 (MKLLLALAGLLAPLA) form the signal peptide. Positions 16 to 138 (MLQTSNGATP…SSGCAYQDVR (123 aa)) are excised as a propeptide. N-linked (GlcNAc...) asparagine glycosylation is present at asparagine 113. Residues cysteine 141 and cysteine 154 are joined by a disulfide bond. Heme b is bound at residue aspartate 234. The active-site Proton acceptor is histidine 235. Residue aspartate 236 coordinates Ca(2+). 2 disulfides stabilise this stretch: cysteine 255–cysteine 265 and cysteine 259–cysteine 283. Position 290 is a cysteine sulfenic acid (-SOH) (cysteine 290). A glycan (N-linked (GlcNAc...) asparagine) is linked at asparagine 297. Threonine 308, phenylalanine 310, aspartate 312, and serine 314 together coordinate Ca(2+). 2 N-linked (GlcNAc...) asparagine glycosylation sites follow: asparagine 329 and asparagine 365. Cysteines 361 and 372 form a disulfide. 2 residues coordinate heme b: glutamate 382 and methionine 383. N-linked (GlcNAc...) asparagine glycosylation is present at asparagine 457. Residue histidine 476 participates in heme b binding. 2 cysteine pairs are disulfide-bonded: cysteine 580–cysteine 637 and cysteine 678–cysteine 704. A glycan (N-linked (GlcNAc...) asparagine) is linked at asparagine 711.

This sequence belongs to the peroxidase family. XPO subfamily. As to quaternary structure, homodimer; disulfide-linked. Each monomer consists of a light and a heavy chain. Found in a complex with CP and LTF; interacts directly with CP, which protects CP antioxidant properties by MPO. The cofactor is Ca(2+). Heme b is required as a cofactor.

Its subcellular location is the lysosome. It catalyses the reaction chloride + H2O2 + H(+) = hypochlorous acid + H2O. In terms of biological role, part of the host defense system of polymorphonuclear leukocytes. It is responsible for microbicidal activity against a wide range of organisms. In the stimulated PMN, MPO catalyzes the production of hypohalous acids, primarily hypochlorous acid in physiologic situations, and other toxic intermediates that greatly enhance PMN microbicidal activity. Mediates the proteolytic cleavage of alpha-1-microglobulin to form t-alpha-1-microglobulin, which potently inhibits oxidation of low density lipoprotein particles and limits vascular damage. The sequence is that of Myeloperoxidase (Mpo) from Mus musculus (Mouse).